Consider the following 162-residue polypeptide: Flagellar assembly factor FliW (162 aa).

It belongs to the FliW family. In terms of assembly, interacts with translational regulator CsrA and flagellin(s).

It is found in the cytoplasm. Its function is as follows. Acts as an anti-CsrA protein, binds CsrA and prevents it from repressing translation of its target genes, one of which is flagellin. Binds to flagellin and participates in the assembly of the flagellum. This chain is Flagellar assembly factor FliW, found in Alkaliphilus metalliredigens (strain QYMF).